The following is a 371-amino-acid chain: MTTITPLHHIRVALERNPYEVVIGNGGLARLGQQMLDAGVQADRRVLVVSNPDVANPYGDACLNSLREAGFSVELLVIDAGEHQKTPATVAEIHDAAYSAKLERSSLMVALGGGVVGDMTGFAAATWLRGIQVVQVPTTLLAMVDASIGGKTGVNHPRGKNLIGAFHQPRLVLIDPSTLNTLPEREFRAGMAEVIKYGILGDTALFEELEACPDPSTPAGLGAERLSSILQRSAAAKARVVAADEKEGSLRAILNYGHTFGHVVETLCGYGTWLHGEAVAIGMVAVGELAVLRGSWSRDDAERQRRLIESAGLPTAWPDLSADAVLNSLQGDKKVRDGRLRFVMPTGIGSVEIRDDVSREEILSCLERLKG.

Residues 114–118 (GVVGD), 138–139 (TT), K151, K160, and 178–181 (TLNT) each bind NAD(+). The Zn(2+) site is built by E193, H258, and H275.

The protein belongs to the sugar phosphate cyclases superfamily. Dehydroquinate synthase family. Requires Co(2+) as cofactor. It depends on Zn(2+) as a cofactor. NAD(+) is required as a cofactor.

Its subcellular location is the cytoplasm. It catalyses the reaction 7-phospho-2-dehydro-3-deoxy-D-arabino-heptonate = 3-dehydroquinate + phosphate. Its pathway is metabolic intermediate biosynthesis; chorismate biosynthesis; chorismate from D-erythrose 4-phosphate and phosphoenolpyruvate: step 2/7. Its function is as follows. Catalyzes the conversion of 3-deoxy-D-arabino-heptulosonate 7-phosphate (DAHP) to dehydroquinate (DHQ). The chain is 3-dehydroquinate synthase from Synechococcus sp. (strain CC9605).